Reading from the N-terminus, the 114-residue chain is T cell receptor beta variable 10-3 (114 aa).

Residues 1–21 form the signal peptide; that stretch reads MGTRLFFYVALCLLWTGHMDA. The 93-residue stretch at 22 to 114 folds into the Ig-like domain; sequence GITQSPRHKV…TSVYFCAISE (93 aa). Cysteine 42 and cysteine 110 are oxidised to a cystine.

Alpha-beta TR is a heterodimer composed of an alpha and beta chain; disulfide-linked. The alpha-beta TR is associated with the transmembrane signaling CD3 coreceptor proteins to form the TR-CD3 (TcR or TCR). The assembly of alpha-beta TR heterodimers with CD3 occurs in the endoplasmic reticulum where a single alpha-beta TR heterodimer associates with one CD3D-CD3E heterodimer, one CD3G-CD3E heterodimer and one CD247 homodimer forming a stable octameric structure. CD3D-CD3E and CD3G-CD3E heterodimers preferentially associate with TR alpha and TR beta chains, respectively. The association of the CD247 homodimer is the last step of TcR assembly in the endoplasmic reticulum and is required for transport to the cell surface.

It localises to the cell membrane. Functionally, v region of the variable domain of T cell receptor (TR) beta chain that participates in the antigen recognition. Alpha-beta T cell receptors are antigen specific receptors which are essential to the immune response and are present on the cell surface of T lymphocytes. Recognize peptide-major histocompatibility (MH) (pMH) complexes that are displayed by antigen presenting cells (APC), a prerequisite for efficient T cell adaptive immunity against pathogens. Binding of alpha-beta TR to pMH complex initiates TR-CD3 clustering on the cell surface and intracellular activation of LCK that phosphorylates the ITAM motifs of CD3G, CD3D, CD3E and CD247 enabling the recruitment of ZAP70. In turn ZAP70 phosphorylates LAT, which recruits numerous signaling molecules to form the LAT signalosome. The LAT signalosome propagates signal branching to three major signaling pathways, the calcium, the mitogen-activated protein kinase (MAPK) kinase and the nuclear factor NF-kappa-B (NF-kB) pathways, leading to the mobilization of transcription factors that are critical for gene expression and essential for T cell growth and differentiation. The T cell repertoire is generated in the thymus, by V-(D)-J rearrangement. This repertoire is then shaped by intrathymic selection events to generate a peripheral T cell pool of self-MH restricted, non-autoaggressive T cells. Post-thymic interaction of alpha-beta TR with the pMH complexes shapes TR structural and functional avidity. This Homo sapiens (Human) protein is T cell receptor beta variable 10-3.